The following is a 470-amino-acid chain: Peripherin (470 aa).

The segment at Met1–Gln99 is head. Tyr17 bears the 3'-nitrotyrosine mark. 3 positions are modified to phosphoserine: Ser28, Ser50, and Ser59. Residues Glu97–Ile407 form the IF rod domain. A coil 1A region spans residues Glu100–Ala132. The segment at Arg133–Leu143 is linker 1. Residues Cys144–Leu239 are coil 1B. The tract at residues Gln240–Thr262 is linker 2. The tract at residues Ala263–Ser405 is coil 2. At Tyr379 the chain carries 3'-nitrotyrosine. Residues Arg406–Tyr470 are tail. A disordered region spans residues Asn447–Tyr470. Basic and acidic residues predominate over residues Ser454 to Tyr470. Tyr470 is subject to Phosphotyrosine.

It belongs to the intermediate filament family. As to quaternary structure, forms homodimers (in vitro). Homopolymerizes into a filamentous network (in vitro). Forms heterodimers with NEFL, NEFM or NEFH (in vitro). Interacts with DST (via C-terminus). Interacts with RAB7A; the interaction is direct. Interacts with PRKCE (via phorbol-ester/DAG-type 2 domain). Phosphorylated; phosphorylation increases after nerve injury in regenerating neurons. As to expression, expressed in the neurons of the outer hair cells in the organ of Corti and to a lesser extent in type I spiral ganglion cells.

It is found in the cytoplasm. The protein resides in the cytoskeleton. It localises to the cell projection. The protein localises to the axon. Its subcellular location is the perikaryon. In terms of biological role, class-III neuronal intermediate filament protein. May form an independent structural network without the involvement of other neurofilaments or may cooperate with the neuronal intermediate filament proteins NEFL, NEFH, NEFM and INA to form a filamentous network. Assembly of the neuronal intermediate filaments may be regulated by RAB7A. Plays a role in the development of unmyelinated sensory neurons. May be involved in axon elongation and axon regeneration after injury. Inhibits neurite extension in type II spiral ganglion neurons in the cochlea. The protein is Peripherin (PRPH) of Homo sapiens (Human).